Consider the following 282-residue polypeptide: Probable metal transport system membrane protein TM_0125 (282 aa).

The next 9 helical transmembrane spans lie at 33-53 (AFVG…IVVF), 58-78 (FIGD…TLIG), 79-99 (ADHR…VSLF), 109-129 (AIGI…SVSG), 148-168 (STDV…TVVF), 184-204 (FYGI…AITV), 210-230 (VVGV…SKIF), 234-254 (FWSL…AGFL), and 259-279 (LDLP…LPML).

The protein belongs to the ABC-3 integral membrane protein family.

The protein resides in the cell inner membrane. In terms of biological role, part of an ATP-driven transport system TM_0123/TM_0124/TM_0125 for a metal. This is Probable metal transport system membrane protein TM_0125 from Thermotoga maritima (strain ATCC 43589 / DSM 3109 / JCM 10099 / NBRC 100826 / MSB8).